We begin with the raw amino-acid sequence, 464 residues long: Rhodopsin (464 aa).

Topologically, residues 1 to 33 are extracellular; it reads MGRDIPDNETWWYNPTMEVHPHWKQFNQVPDAV. N8 carries N-linked (GlcNAc...) asparagine glycosylation. Residues 34 to 58 traverse the membrane as a helical segment; it reads YYSLGIFIGICGIIGCTGNGIVIYL. Residues 59 to 70 are Cytoplasmic-facing; it reads FTKTKSLQTPAN. The chain crosses the membrane as a helical span at residues 71–97; that stretch reads MFIINLAFSDFTFSLVNGFPLMTISCF. Topologically, residues 98 to 109 are extracellular; it reads IKKWVFGMAACK. C108 and C186 are disulfide-bonded. A helical membrane pass occupies residues 110–131; sequence VYGFIGGIFGLMSIMTMSMISI. A 'Ionic lock' involved in activated form stabilization motif is present at residues 132-134; it reads DRY. Residues 132–151 lie on the Cytoplasmic side of the membrane; the sequence is DRYNVIGRPMAASKKMSHRR. The chain crosses the membrane as a helical span at residues 152–172; that stretch reads AFLMIIFVWMWSTLWSIGPIF. Residues 173–199 are Extracellular-facing; sequence GWGAYVLEGVLCNCSFDYITRDSATRS. The chain crosses the membrane as a helical span at residues 200-224; that stretch reads NIVCMYIFAFCFPILIIFFCYFNIV. The Cytoplasmic portion of the chain corresponds to 225-261; it reads MAVSNHEKEMAAMAKRLNAKELRKAQAGASAEMKLAK. A helical transmembrane segment spans residues 262 to 283; the sequence is ISIVIVTQFLLSWSPYAVVALL. Residues 284–293 are Extracellular-facing; sequence AQFGPIEWVT. The helical transmembrane segment at 294-315 threads the bilayer; sequence PYAAQLPVMFAKASAIHNPLIY. An N6-(retinylidene)lysine modification is found at K305. Over 316-464 the chain is Cytoplasmic; it reads SVSHPKFREA…QGVDNQAYQA (149 aa). Residues C336 and C337 are each lipidated (S-palmitoyl cysteine). The interval 344-464 is disordered; that stretch reads VEDDKDAETE…QGVDNQAYQA (121 aa). Over residues 367–401 the composition is skewed to low complexity; the sequence is AAQMKEMMAMMQKMQQQQAAYPPQGAYPPQGGYPP. Composition is skewed to pro residues over residues 416 to 425 and 434 to 452; these read QGYPPPPQGY and QGYP…PQAA.

It belongs to the G-protein coupled receptor 1 family. Opsin subfamily. Post-translationally, contains one covalently linked retinal chromophore. Upon light absorption, the covalently bound 11-cis-retinal is converted to all-trans-retinal. After hydrolysis of the Schiff base and release of the covalently bound all-trans-retinal, active rhodopsin is regenerated by binding of a fresh molecule of 11-cis-retinal.

It localises to the cell projection. The protein resides in the rhabdomere membrane. In terms of biological role, photoreceptor required for image-forming vision at low light intensity. Light-induced isomerization of 11-cis to all-trans retinal triggers a conformational change that activates signaling via G-proteins. Signaling mediates the activation of phospholipase C. Subsequent receptor phosphorylation mediates displacement of the bound G-protein alpha subunit by arrestin and terminates signaling. In Sepia officinalis (Common cuttlefish), this protein is Rhodopsin (RHO).